A 216-amino-acid polypeptide reads, in one-letter code: Protein-L-isoaspartate O-methyltransferase (216 aa).

The active site involves Ser-62.

It belongs to the methyltransferase superfamily. L-isoaspartyl/D-aspartyl protein methyltransferase family.

It localises to the cytoplasm. The catalysed reaction is [protein]-L-isoaspartate + S-adenosyl-L-methionine = [protein]-L-isoaspartate alpha-methyl ester + S-adenosyl-L-homocysteine. Its function is as follows. Catalyzes the methyl esterification of L-isoaspartyl residues in peptides and proteins that result from spontaneous decomposition of normal L-aspartyl and L-asparaginyl residues. It plays a role in the repair and/or degradation of damaged proteins. This Methanospirillum hungatei JF-1 (strain ATCC 27890 / DSM 864 / NBRC 100397 / JF-1) protein is Protein-L-isoaspartate O-methyltransferase.